We begin with the raw amino-acid sequence, 452 residues long: Maltoporin (452 aa).

An N-terminal signal peptide occupies residues 1–25; that stretch reads MMITLRKLPLAVAVAAGVMSAQAMA.

It belongs to the porin LamB (TC 1.B.3) family. As to quaternary structure, homotrimer formed of three 18-stranded antiparallel beta-barrels, containing three independent channels.

It is found in the cell outer membrane. It catalyses the reaction beta-maltose(in) = beta-maltose(out). In terms of biological role, involved in the transport of maltose and maltodextrins. The polypeptide is Maltoporin (Salmonella paratyphi A (strain ATCC 9150 / SARB42)).